Here is a 319-residue protein sequence, read N- to C-terminus: Protein-methionine-sulfoxide reductase catalytic subunit MsrP (319 aa).

The segment at residues 1–40 (MHKLNENDVTPEHIFFERRKIIQSMGLMGAASLLPRFSLA) is a signal peptide (tat-type signal). Mo-molybdopterin contacts are provided by residues Asn-73, 76-77 (YE), Cys-131, Thr-166, Asn-218, Arg-223, and 234-236 (NIK).

This sequence belongs to the MsrP family. Heterodimer of a catalytic subunit (MsrP) and a heme-binding subunit (MsrQ). Mo-molybdopterin is required as a cofactor. Predicted to be exported by the Tat system. The position of the signal peptide cleavage has not been experimentally proven.

It localises to the periplasm. It carries out the reaction L-methionyl-[protein] + a quinone + H2O = L-methionyl-(S)-S-oxide-[protein] + a quinol. It catalyses the reaction L-methionyl-[protein] + a quinone + H2O = L-methionyl-(R)-S-oxide-[protein] + a quinol. Functionally, part of the MsrPQ system that repairs oxidized periplasmic proteins containing methionine sulfoxide residues (Met-O), using respiratory chain electrons. Thus protects these proteins from oxidative-stress damage caused by reactive species of oxygen and chlorine generated by the host defense mechanisms. MsrPQ is essential for the maintenance of envelope integrity under bleach stress, rescuing a wide series of structurally unrelated periplasmic proteins from methionine oxidation. The catalytic subunit MsrP is non-stereospecific, being able to reduce both (R-) and (S-) diastereoisomers of methionine sulfoxide. This is Protein-methionine-sulfoxide reductase catalytic subunit MsrP from Pasteurella multocida (strain Pm70).